The following is a 169-amino-acid chain: Inorganic pyrophosphatase (169 aa).

Substrate is bound by residues Lys20, Arg34, and Tyr46. Asp56, Asp61, and Asp93 together coordinate Mg(2+). Tyr130 contacts substrate.

Belongs to the PPase family. As to quaternary structure, homohexamer. Mg(2+) is required as a cofactor.

The protein resides in the cytoplasm. The catalysed reaction is diphosphate + H2O = 2 phosphate + H(+). Functionally, catalyzes the hydrolysis of inorganic pyrophosphate (PPi) forming two phosphate ions. The protein is Inorganic pyrophosphatase of Methanosarcina mazei (strain ATCC BAA-159 / DSM 3647 / Goe1 / Go1 / JCM 11833 / OCM 88) (Methanosarcina frisia).